Here is a 358-residue protein sequence, read N- to C-terminus: Gibberellin 3-beta-dioxygenase 1 (358 aa).

One can recognise a Fe2OG dioxygenase domain in the interval 204–308 (DLNWAQAALQ…RLSVAFLWGP (105 aa)). The Fe cation site is built by histidine 232, aspartate 234, and histidine 289. Arginine 299 is a catalytic residue.

It belongs to the iron/ascorbate-dependent oxidoreductase family. GA3OX subfamily. L-ascorbate is required as a cofactor. It depends on Fe cation as a cofactor. As to expression, expressed in stems, roots, leaves, flowers, and siliques. Highly expressed near the nodes in stems and in the stamen filaments of flowers. Detected in developing cotyledons, vegetative shoot apical meristem and non-meristematic, non-elongation regions of the roots. Found in the cortex and the endodermis of the embryo axis in germinating seeds and in the placenta in developing siliques.

It catalyses the reaction gibberellin A9 + 2-oxoglutarate + O2 = gibberellin A4 + succinate + CO2. It carries out the reaction gibberellin A20 + 2-oxoglutarate + O2 = gibberellin A1 + succinate + CO2. The protein operates within plant hormone biosynthesis; gibberellin biosynthesis. Converts the inactive gibberellin (GA) precursors GA9 and GA20 into the bioactives gibberellins GA4 and GA1, respectively. Involved in the production of bioactive GA for vegetative growth and development. In Arabidopsis thaliana (Mouse-ear cress), this protein is Gibberellin 3-beta-dioxygenase 1 (GA3OX1).